The following is a 599-amino-acid chain: Aspartate--tRNA ligase (599 aa).

Glutamate 175 lines the L-aspartate pocket. The segment at 199 to 202 is aspartate; the sequence is QQFK. Positions 221 and 446 each coordinate L-aspartate. ATP is bound at residue 221–223; that stretch reads RDE. An ATP-binding site is contributed by glutamate 480. Arginine 487 contacts L-aspartate. 532 to 535 provides a ligand contact to ATP; sequence GVDR.

The protein belongs to the class-II aminoacyl-tRNA synthetase family. Type 1 subfamily. As to quaternary structure, homodimer.

The protein resides in the cytoplasm. It catalyses the reaction tRNA(Asp) + L-aspartate + ATP = L-aspartyl-tRNA(Asp) + AMP + diphosphate. Functionally, catalyzes the attachment of L-aspartate to tRNA(Asp) in a two-step reaction: L-aspartate is first activated by ATP to form Asp-AMP and then transferred to the acceptor end of tRNA(Asp). The polypeptide is Aspartate--tRNA ligase (Streptomyces griseus subsp. griseus (strain JCM 4626 / CBS 651.72 / NBRC 13350 / KCC S-0626 / ISP 5235)).